Consider the following 510-residue polypeptide: Propionyl-CoA carboxylase beta chain (510 aa).

The CoA carboxyltransferase N-terminal domain occupies 1-257; sequence MKDILQELEN…SNRTPAPVRP (257 aa). Positions 1–504 are carboxyltransferase; it reads MKDILQELEN…NKKLANPWKK (504 aa). Residues 264 to 504 form the CoA carboxyltransferase C-terminal domain; sequence RIEDSLDTLI…NKKLANPWKK (241 aa).

The protein belongs to the AccD/PCCB family. In terms of assembly, probably a dodecamer composed of six biotin-containing alpha subunits and six beta subunits.

It carries out the reaction propanoyl-CoA + hydrogencarbonate + ATP = (S)-methylmalonyl-CoA + ADP + phosphate + H(+). The protein operates within metabolic intermediate metabolism; propanoyl-CoA degradation; succinyl-CoA from propanoyl-CoA: step 1/3. The sequence is that of Propionyl-CoA carboxylase beta chain from Cereibacter sphaeroides (strain ATCC 17023 / DSM 158 / JCM 6121 / CCUG 31486 / LMG 2827 / NBRC 12203 / NCIMB 8253 / ATH 2.4.1.) (Rhodobacter sphaeroides).